The sequence spans 218 residues: Dual specificity protein phosphatase TpbA (218 aa).

Positions 1–28 are cleaved as a signal peptide; the sequence is MHRSPLAWLRLLLAAVLGAFLLGGPLHA. Residues 44 to 188 enclose the Tyrosine-protein phosphatase domain; it reads DPSINLYRMS…YVRGADVDGL (145 aa). D105 (proton donor/acceptor) is an active-site residue. C132 (phosphocysteine intermediate) is an active-site residue.

The protein belongs to the protein-tyrosine phosphatase family. In terms of assembly, monomer in solution.

It localises to the periplasm. The enzyme catalyses O-phospho-L-tyrosyl-[protein] + H2O = L-tyrosyl-[protein] + phosphate. It catalyses the reaction O-phospho-L-threonyl-[protein] + H2O = L-threonyl-[protein] + phosphate. It carries out the reaction O-phospho-L-seryl-[protein] + H2O = L-seryl-[protein] + phosphate. With respect to regulation, the phosphatase activity is completely inhibited by trisodium orthovanadate, a tyrosine phosphatase specific inhibitor. Its function is as follows. Phosphatase that regulates diverse phenotypes in P.aeruginosa via regulation of the concentration of cellular c-di-GMP. Acts by dephosphorylating the membrane-anchored diguanylate cyclase TpbB at tyrosine and serine/threonine sites, leading to inactivation of TpbB and reduced c-di-GMP production. The reduced cellular c-di-GMP concentration leads to reduced adhesin expression, reduced extracellular polysaccharide (EPS) production, pellicule production, cell aggregation and biofilm formation, and enhanced swimming and swarming. It affects colony morphology and controls rugose colony formation. TpbA also acts as a positive regulator of extracellular DNA (eDNA, a major component of the biofilm matrix) and cell lysis by reducing c-di-GMP concentrations. In vitro shows phosphatase activity toward p-nitrophenyl phosphate (pNPP), tyrosine phosphopeptides and a threonine phosphopeptide. Does not have phosphodiesterases (PDE) activity, and cannot degrade c-di-GMP. This is Dual specificity protein phosphatase TpbA from Pseudomonas aeruginosa (strain UCBPP-PA14).